Here is a 179-residue protein sequence, read N- to C-terminus: Pyridoxal 5'-phosphate synthase subunit PdxT (179 aa).

Gly48–Ser50 contacts L-glutamine. Cys79 functions as the Nucleophile in the catalytic mechanism. Residues Arg101 and Ile127–Arg128 each bind L-glutamine. Active-site charge relay system residues include His163 and Glu165.

Belongs to the glutaminase PdxT/SNO family. In terms of assembly, in the presence of PdxS, forms a dodecamer of heterodimers. Only shows activity in the heterodimer.

It catalyses the reaction aldehydo-D-ribose 5-phosphate + D-glyceraldehyde 3-phosphate + L-glutamine = pyridoxal 5'-phosphate + L-glutamate + phosphate + 3 H2O + H(+). The enzyme catalyses L-glutamine + H2O = L-glutamate + NH4(+). The protein operates within cofactor biosynthesis; pyridoxal 5'-phosphate biosynthesis. In terms of biological role, catalyzes the hydrolysis of glutamine to glutamate and ammonia as part of the biosynthesis of pyridoxal 5'-phosphate. The resulting ammonia molecule is channeled to the active site of PdxS. In Francisella tularensis subsp. tularensis (strain FSC 198), this protein is Pyridoxal 5'-phosphate synthase subunit PdxT.